A 1013-amino-acid chain; its full sequence is PHD finger protein 20-like protein 1 (1013 aa).

A Tudor 1 domain is found at 11–71 (ITFEIGARLE…SNRLRPLERP (61 aa)). Residues Lys-75 and Lys-79 each participate in a glycyl lysine isopeptide (Lys-Gly) (interchain with G-Cter in SUMO2) cross-link. The Tudor 2 domain maps to 85-141 (FDFKAGEEVLARWTDCRYYPAKIEAINKEGTFTVQFYDGVIRCLKRMHIKAMPEDAK). 4 disordered regions span residues 183–206 (AKNKTGTKPRASANSNKEKERDGG), 309–368 (EQAI…TPKS), 389–454 (VINK…QSSV), and 482–511 (VTGSRTPHPSYHGGECPREEKEETPLFANP). Residues 315–346 (KPQSQKKNEAVISSSANTQKPALLSSTLSSGK) show a composition bias toward polar residues. Position 368 is a phosphoserine (Ser-368). The segment covering 404-415 (PCKHSERRRRSQ) has biased composition (basic residues). The residue at position 432 (Ser-432) is a Phosphoserine. Low complexity predominate over residues 443 to 453 (SISSQNQQQSS). Positions 496-505 (ECPREEKEET) are enriched in basic and acidic residues. A Glycyl lysine isopeptide (Lys-Gly) (interchain with G-Cter in SUMO2) cross-link involves residue Lys-530. Residues 533-565 (KKVKLEEKTSTAFGKRKEKDKEKKEKRDKDHYK) show a composition bias toward basic and acidic residues. A disordered region spans residues 533–585 (KKVKLEEKTSTAFGKRKEKDKEKKEKRDKDHYKPKQKKKKKKKKKSKQHDYSD). Residues 566–579 (PKQKKKKKKKKKSK) show a composition bias toward basic residues. The segment at 681–729 (IVRCICELDEENGFMIQCEECLCWQHSVCMGLLEDSIPEQYICYICRDP) adopts a PHD-type zinc-finger fold. Positions 824–852 (RKITPQDRANSEGKECVQNHKEPALRMEE) are enriched in basic and acidic residues. A disordered region spans residues 824-911 (RKITPQDRAN…LLYKNRGVSE (88 aa)). The span at 854–878 (YITSEHSYQKPQSFSQDCQSLTDPG) shows a compositional bias: polar residues. Over residues 879-892 (SSDDDDASSFEEDG) the composition is skewed to acidic residues. Residue Lys-905 is modified to N6-acetyllysine.

Interacts with methylated DNMT1 (DNMT1K142me1). Interacts with SOX2.

The protein localises to the nucleus. In terms of biological role, is a negative regulator of proteasomal degradation of a set of methylated proteins, including DNMT1 and SOX2. Involved in the maintainance of embryonic stem cells pluripotency, through the regulation of SOX2 levels. The sequence is that of PHD finger protein 20-like protein 1 (Phf20l1) from Mus musculus (Mouse).